We begin with the raw amino-acid sequence, 430 residues long: Serine--tRNA ligase (430 aa).

Position 231–233 (231–233 (TSE)) interacts with L-serine. 262–264 (RSE) contacts ATP. An L-serine-binding site is contributed by Glu-285. Residue 349–352 (EISS) coordinates ATP. Ser-385 lines the L-serine pocket.

The protein belongs to the class-II aminoacyl-tRNA synthetase family. Type-1 seryl-tRNA synthetase subfamily. Homodimer. The tRNA molecule binds across the dimer.

It localises to the cytoplasm. It catalyses the reaction tRNA(Ser) + L-serine + ATP = L-seryl-tRNA(Ser) + AMP + diphosphate + H(+). The enzyme catalyses tRNA(Sec) + L-serine + ATP = L-seryl-tRNA(Sec) + AMP + diphosphate + H(+). Its pathway is aminoacyl-tRNA biosynthesis; selenocysteinyl-tRNA(Sec) biosynthesis; L-seryl-tRNA(Sec) from L-serine and tRNA(Sec): step 1/1. Its function is as follows. Catalyzes the attachment of serine to tRNA(Ser). Is also able to aminoacylate tRNA(Sec) with serine, to form the misacylated tRNA L-seryl-tRNA(Sec), which will be further converted into selenocysteinyl-tRNA(Sec). The sequence is that of Serine--tRNA ligase from Ruegeria pomeroyi (strain ATCC 700808 / DSM 15171 / DSS-3) (Silicibacter pomeroyi).